We begin with the raw amino-acid sequence, 225 residues long: uncharacterized protein (225 aa).

Residues Glu69, Glu71, and Asp100 each contribute to the a divalent metal cation site.

The protein belongs to the FAH family.

This is an uncharacterized protein from Pyrococcus abyssi (strain GE5 / Orsay).